A 281-amino-acid chain; its full sequence is Diaminopimelate epimerase (281 aa).

N13 and N66 together coordinate substrate. The Proton donor role is filled by C75. Substrate contacts are provided by residues 76 to 77 (GN), N164, N197, and 215 to 216 (ER). The active-site Proton acceptor is the C224. 225–226 (GT) contacts substrate.

It belongs to the diaminopimelate epimerase family. In terms of assembly, homodimer.

It is found in the cytoplasm. The catalysed reaction is (2S,6S)-2,6-diaminopimelate = meso-2,6-diaminopimelate. It functions in the pathway amino-acid biosynthesis; L-lysine biosynthesis via DAP pathway; DL-2,6-diaminopimelate from LL-2,6-diaminopimelate: step 1/1. Its function is as follows. Catalyzes the stereoinversion of LL-2,6-diaminopimelate (L,L-DAP) to meso-diaminopimelate (meso-DAP), a precursor of L-lysine and an essential component of the bacterial peptidoglycan. This is Diaminopimelate epimerase from Rippkaea orientalis (strain PCC 8801 / RF-1) (Cyanothece sp. (strain PCC 8801)).